We begin with the raw amino-acid sequence, 140 residues long: MNSVCFATPHTKHMDSKMQLTSSPASLWRPWLVTRKDAQTECRRTKLACPYSRPEVPGNTTTDGKMQSFQHPVRLYWPRSKSFDYLFSDGEALLRNFPVQATINFYDESDSEDEEESCDEDDESDVEDCLKHNSHFTAFN.

A WRPW motif; required for gro2-binding motif is present at residues 28–31 (WRPW). Residues 71-106 (HPVRLYWPRSKSFDYLFSDGEALLRNFPVQATINFY) are ripply homology domain. A disordered region spans residues 107-126 (DESDSEDEEESCDEDDESDV).

It belongs to the ripply family. As to quaternary structure, interacts with gro2 via the WRPW motif. As to expression, expressed in the embryonic anterior presomitic mesoderm and in newly formed somites.

It localises to the nucleus. Functionally, plays a role in somitogenesis. Essential for transcriptional repression of the segmental patterning genes, thus terminating the segmentation program in the presomitic mesoderm, and also required for the maintenance of rostrocaudal polarity in somites. The polypeptide is Protein ripply1 (Danio rerio (Zebrafish)).